Consider the following 159-residue polypeptide: MKIISKIIVILLAASMLQACQGPGGMNKQGSGTLIGGTAGALLGSQFGGGTGRLAAVGAGALLGAILGNQIGAGMDEQDRKLAELTSQRALEAAPSGSSVQWRNPDNGNYGTVTPSKAYKNNTGQYCREYTQTVVVGGKQQKAYGTACRQPDGQWQVVN.

The N-terminal stretch at 1 to 19 is a signal peptide; the sequence is MKIISKIIVILLAASMLQA. Residue Cys20 is the site of N-palmitoyl cysteine attachment. Residue Cys20 is the site of S-diacylglycerol cysteine attachment.

It belongs to the rickettsiale 17 kDa surface antigen family.

The protein resides in the cell outer membrane. This is 17 kDa surface antigen (omp) from Rickettsia bellii.